We begin with the raw amino-acid sequence, 73 residues long: UPF0435 protein BH2488 (73 aa).

The protein belongs to the UPF0435 family.

The protein is UPF0435 protein BH2488 of Halalkalibacterium halodurans (strain ATCC BAA-125 / DSM 18197 / FERM 7344 / JCM 9153 / C-125) (Bacillus halodurans).